A 459-amino-acid polypeptide reads, in one-letter code: Flavin-containing monooxygenase FMO GS-OX1 (459 aa).

17–22 (GAGAAG) is a binding site for FAD. NADP(+) is bound at residue 211–216 (GNYASG).

It belongs to the FMO family. FAD is required as a cofactor. As to expression, mainly expressed in leaves. Low levels in flowers and seeds.

The catalysed reaction is a (Z)-omega-(methylsulfanyl)-N-sulfo-alkylhydroximate S-glucoside + NADPH + O2 + H(+) = a (Z)-omega-(methylsulfinyl)-alkyl-glucosinolate + NADP(+) + H2O. Functionally, catalyzes the conversion of methylthioalkyl glucosinolates into methylsulfinylalkyl glucosinolates. Able to S-oxygenate both desulfo- and intact 4-methylthiobutyl glucosinolates, but no activity with methionine, dihomomethionine or 5-methylthiopentaldoxime. The protein is Flavin-containing monooxygenase FMO GS-OX1 (FMOGS-OX1) of Arabidopsis thaliana (Mouse-ear cress).